The primary structure comprises 121 residues: Large ribosomal subunit protein bL19 (121 aa).

The protein belongs to the bacterial ribosomal protein bL19 family.

This protein is located at the 30S-50S ribosomal subunit interface and may play a role in the structure and function of the aminoacyl-tRNA binding site. This is Large ribosomal subunit protein bL19 from Legionella pneumophila (strain Paris).